A 1012-amino-acid chain; its full sequence is Vacuolar membrane protease (1012 aa).

The Cytoplasmic portion of the chain corresponds to 1–60 (MRRSTDPRNLLVRRGPLLVDGESAISELDPGFFPTGDAPKMSSTTRRRFNLIAFTPGPVT). The helical transmembrane segment at 61–81 (VISSLVYLALLIPLLLVHTIV) threads the bilayer. Topologically, residues 82 to 432 (PSAPKSNPKG…SFAVFRLHTL (351 aa)) are vacuolar. An N-linked (GlcNAc...) asparagine glycan is attached at N159. Zn(2+)-binding residues include H215 and D227. The Proton acceptor role is filled by E261. 3 residues coordinate Zn(2+): E262, E287, and H360. The helical transmembrane segment at 433–453 (FAISVTLLVVCPIVLFVIGII) threads the bilayer. Over 454–487 (LSKMDKMYLFSIHETIPETKEKVSVRGLRGLFRY) the chain is Cytoplasmic. Residues 488 to 508 (PIILVVSSGILIGLSYLLAKV) form a helical membrane-spanning segment. Topologically, residues 509-518 (NPFIVHSSSY) are vacuolar. A helical membrane pass occupies residues 519-539 (AVWSMMLSSWIFMTWFLSCIA). Over 540–550 (DFFRPSALHRA) the chain is Cytoplasmic. Residues 551 to 571 (YTFTWQLLVMWVLLVISTVYV) traverse the membrane as a helical segment. The Vacuolar portion of the chain corresponds to 572–575 (NQHD). A helical membrane pass occupies residues 576–596 (IAAGYFIVFYFAGTFLATLIS). The Cytoplasmic portion of the chain corresponds to 597-710 (YLELFALPNK…WSASLPTWTW (114 aa)). Polar residues predominate over residues 614 to 629 (SQYPSRLGSNRSSRIL). Residues 614 to 660 (SQYPSRLGSNRSSRILSPSADELPTGGDNNGEIYDGEEEPTESSSLL) are disordered. The chain crosses the membrane as a helical span at residues 711-731 (VLQFLFVGPVVIMFIGQLGLF). Over 732–743 (LTSAMNQVGADG) the chain is Vacuolar. A helical transmembrane segment spans residues 744–764 (VGLLVVYIAIAVFSVLLLIPL). At 765–777 (SPFIHRFTYHVPT) the chain is on the cytoplasmic side. The helical transmembrane segment at 778–798 (FLLLVFIATLIYNLAAFPFSA) threads the bilayer. At 799–1012 (ENRLKIFFVQ…DGLVEVSRGF (214 aa)) the chain is on the vacuolar side. N-linked (GlcNAc...) asparagine glycosylation is found at N842 and N878.

The protein belongs to the peptidase M28 family. Requires Zn(2+) as cofactor.

The protein localises to the vacuole membrane. In terms of biological role, may be involved in vacuolar sorting and osmoregulation. This is Vacuolar membrane protease from Coccidioides posadasii (strain C735) (Valley fever fungus).